We begin with the raw amino-acid sequence, 88 residues long: Small ribosomal subunit protein uS19 (88 aa).

The protein belongs to the universal ribosomal protein uS19 family.

Functionally, protein S19 forms a complex with S13 that binds strongly to the 16S ribosomal RNA. The chain is Small ribosomal subunit protein uS19 from Chlamydia caviae (strain ATCC VR-813 / DSM 19441 / 03DC25 / GPIC) (Chlamydophila caviae).